A 70-amino-acid chain; its full sequence is Chondroitin proteoglycan 9 (70 aa).

A signal peptide spans 1 to 19 (MNFWHLLLLAVLFFVTVFG). O-linked (Xyl...) (chondroitin sulfate) serine glycans are attached at residues Ser-25 and Ser-27.

The sequence is that of Chondroitin proteoglycan 9 (cpg-9) from Caenorhabditis briggsae.